A 364-amino-acid chain; its full sequence is Probable UDP-arabinopyranose mutase 4 (364 aa).

The DXD motif signature appears at Asp106–Asp108. A glycan (N-linked (Glc...) arginine) is linked at Arg154.

Belongs to the RGP family. As to quaternary structure, heteromers with RGP1 and RGP2. Mn(2+) serves as cofactor. It depends on Mg(2+) as a cofactor. Reversibly glycosylated in vitro by UDP-glucose, UDP-xylose and UDP-galactose, but not UDP-mannose. Specifically expressed in developing seeds.

It localises to the cytoplasm. It is found in the cytosol. The protein localises to the golgi apparatus. The enzyme catalyses UDP-beta-L-arabinofuranose = UDP-beta-L-arabinopyranose. Its function is as follows. Probable UDP-L-arabinose mutase involved in the biosynthesis of cell wall non-cellulosic polysaccharides. In Arabidopsis thaliana (Mouse-ear cress), this protein is Probable UDP-arabinopyranose mutase 4.